The chain runs to 218 residues: Large ribosomal subunit protein uL3 (218 aa).

This sequence belongs to the universal ribosomal protein uL3 family. Part of the 50S ribosomal subunit. Forms a cluster with proteins L14 and L19.

Functionally, one of the primary rRNA binding proteins, it binds directly near the 3'-end of the 23S rRNA, where it nucleates assembly of the 50S subunit. The polypeptide is Large ribosomal subunit protein uL3 (Corynebacterium urealyticum (strain ATCC 43042 / DSM 7109)).